We begin with the raw amino-acid sequence, 198 residues long: Putative glutathione S-transferase alpha-2 (198 aa).

S2 is modified (N-acetylserine). One can recognise a GST N-terminal domain in the interval 5 to 81 (SVPSLTYFQG…YIAKKHNFMG (77 aa)). Glutathione is bound by residues Y11, R45, 52-53 (QL), and 65-66 (QS). The GST C-terminal domain occupies 83–198 (NLEEEFLVDQ…YIKERPETKF (116 aa)).

It belongs to the GST superfamily. Alpha family.

It carries out the reaction RX + glutathione = an S-substituted glutathione + a halide anion + H(+). Functionally, conjugation of reduced glutathione to a wide number of exogenous and endogenous hydrophobic electrophiles. The chain is Putative glutathione S-transferase alpha-2 (gsta2-1) from Dictyostelium discoideum (Social amoeba).